We begin with the raw amino-acid sequence, 294 residues long: Indole-3-glycerol phosphate synthase (294 aa).

Belongs to the TrpC family.

It carries out the reaction 1-(2-carboxyphenylamino)-1-deoxy-D-ribulose 5-phosphate + H(+) = (1S,2R)-1-C-(indol-3-yl)glycerol 3-phosphate + CO2 + H2O. Its pathway is amino-acid biosynthesis; L-tryptophan biosynthesis; L-tryptophan from chorismate: step 4/5. This is Indole-3-glycerol phosphate synthase from Crocosphaera subtropica (strain ATCC 51142 / BH68) (Cyanothece sp. (strain ATCC 51142)).